A 491-amino-acid chain; its full sequence is Galactose-1-phosphate uridylyltransferase (491 aa).

The protein belongs to the galactose-1-phosphate uridylyltransferase type 2 family.

It localises to the cytoplasm. The catalysed reaction is alpha-D-galactose 1-phosphate + UDP-alpha-D-glucose = alpha-D-glucose 1-phosphate + UDP-alpha-D-galactose. It participates in carbohydrate metabolism; galactose metabolism. The sequence is that of Galactose-1-phosphate uridylyltransferase (galT) from Streptococcus mutans serotype c (strain ATCC 700610 / UA159).